The chain runs to 281 residues: CLA biosynthesis isomerase (281 aa).

It belongs to the ADC family.

It is found in the cytoplasm. It catalyses the reaction 10-oxo-(12Z)-octadecenoate = 10-oxo-(11E)-octadecenoate. Its pathway is lipid metabolism; fatty acid metabolism. Its function is as follows. Is involved in a saturation metabolic pathway of polyunsaturated fatty acids, that detoxifies unsaturated fatty acids and generates hydroxy fatty acids, oxo fatty acids, conjugated fatty acids such as conjugated linoleic acids (CLAs), and partially saturated trans-fatty acids as intermediates. CLA-DC catalyzes the migration of the carbon-carbon double bond in 10-oxo-(12Z)-octadecenoate to produce 10-oxo-(11E)-octadecenoate, during linoleate metabolism. As part of the gut microbiome, this enzyme modifies host fatty acid composition and is expected to improve human health by altering lipid metabolism related to the onset of metabolic syndrome. The sequence is that of CLA biosynthesis isomerase from Lactiplantibacillus plantarum (Lactobacillus plantarum).